The primary structure comprises 95 residues: MAPQTSNLWILLLLVVVMMMSQGCCQHWSYGLSPGGKRDLDSLSDTLGNIIERFPHVDSPCSVLGCVEEPHVPRMYRMKGFIGSERDIGHRMYKK.

A signal peptide spans Met-1–Cys-25. Gln-26 is subject to Pyrrolidone carboxylic acid. Glycine amide is present on Gly-35.

This sequence belongs to the GnRH family.

It localises to the secreted. In terms of biological role, stimulates the secretion of gonadotropins. This chain is Progonadoliberin-1 (gnrh1), found in Sparus aurata (Gilthead sea bream).